The sequence spans 412 residues: Peptidase T (412 aa).

Zn(2+) is bound at residue His-79. Asp-81 is a catalytic residue. Zn(2+) is bound at residue Asp-142. The active-site Proton acceptor is Glu-176. 3 residues coordinate Zn(2+): Glu-177, Asp-199, and His-381.

This sequence belongs to the peptidase M20B family. Zn(2+) serves as cofactor.

It is found in the cytoplasm. It catalyses the reaction Release of the N-terminal residue from a tripeptide.. Functionally, cleaves the N-terminal amino acid of tripeptides. The polypeptide is Peptidase T (Exiguobacterium sp. (strain ATCC BAA-1283 / AT1b)).